A 417-amino-acid polypeptide reads, in one-letter code: Odorant receptor Or1 (417 aa).

Residues methionine 1–lysine 2 lie on the Cytoplasmic side of the membrane. The helical transmembrane segment at leucine 3–leucine 23 threads the bilayer. The Extracellular portion of the chain corresponds to leucine 24–tyrosine 45. Residues isoleucine 46–leucine 66 traverse the membrane as a helical segment. Over tyrosine 67–aspartate 73 the chain is Cytoplasmic. Residues isoleucine 74–leucine 94 form a helical membrane-spanning segment. Residues glutamate 95–glycine 133 are Extracellular-facing. An N-linked (GlcNAc...) asparagine glycan is attached at asparagine 112. Residues valine 134–methionine 154 traverse the membrane as a helical segment. Topologically, residues serine 155–aspartate 178 are cytoplasmic. A helical transmembrane segment spans residues isoleucine 179–asparagine 199. Residues phenylalanine 200–aspartate 284 lie on the Extracellular side of the membrane. The chain crosses the membrane as a helical span at residues isoleucine 285 to leucine 305. Over leucine 306–aspartate 317 the chain is Cytoplasmic. The helical transmembrane segment at leucine 318 to valine 338 threads the bilayer. Residues glycine 339–glutamate 417 are Extracellular-facing.

This sequence belongs to the insect chemoreceptor superfamily. Heteromeric odorant receptor channel (TC 1.A.69) family. Or2a subfamily. As to expression, female-specific antennae and maxillary palp expression.

It is found in the cell membrane. Odorant receptor which plays a critical role in the anthropophilic host-seeking behavior; establishes the host preference to transmit malaria. May participate in the phenomenon of decreased host-seeking behavior in disease vector mosquitoes after blood feeding. In Anopheles gambiae (African malaria mosquito), this protein is Odorant receptor Or1 (OR1).